A 172-amino-acid chain; its full sequence is Crossover junction endodeoxyribonuclease RuvC (172 aa).

Catalysis depends on residues Asp11, Glu70, and Asp142. Residues Asp11, Glu70, and Asp142 each coordinate Mg(2+).

The protein belongs to the RuvC family. In terms of assembly, homodimer which binds Holliday junction (HJ) DNA. The HJ becomes 2-fold symmetrical on binding to RuvC with unstacked arms; it has a different conformation from HJ DNA in complex with RuvA. In the full resolvosome a probable DNA-RuvA(4)-RuvB(12)-RuvC(2) complex forms which resolves the HJ. Mg(2+) is required as a cofactor.

The protein localises to the cytoplasm. It carries out the reaction Endonucleolytic cleavage at a junction such as a reciprocal single-stranded crossover between two homologous DNA duplexes (Holliday junction).. Functionally, the RuvA-RuvB-RuvC complex processes Holliday junction (HJ) DNA during genetic recombination and DNA repair. Endonuclease that resolves HJ intermediates. Cleaves cruciform DNA by making single-stranded nicks across the HJ at symmetrical positions within the homologous arms, yielding a 5'-phosphate and a 3'-hydroxyl group; requires a central core of homology in the junction. The consensus cleavage sequence is 5'-(A/T)TT(C/G)-3'. Cleavage occurs on the 3'-side of the TT dinucleotide at the point of strand exchange. HJ branch migration catalyzed by RuvA-RuvB allows RuvC to scan DNA until it finds its consensus sequence, where it cleaves and resolves the cruciform DNA. This chain is Crossover junction endodeoxyribonuclease RuvC, found in Hydrogenovibrio crunogenus (strain DSM 25203 / XCL-2) (Thiomicrospira crunogena).